The chain runs to 294 residues: Probable endonuclease 4 (294 aa).

9 residues coordinate Zn(2+): H78, H118, E157, D191, H194, H228, D241, H243, and E273.

This sequence belongs to the AP endonuclease 2 family. Zn(2+) is required as a cofactor.

The catalysed reaction is Endonucleolytic cleavage to 5'-phosphooligonucleotide end-products.. Its function is as follows. Endonuclease IV plays a role in DNA repair. It cleaves phosphodiester bonds at apurinic or apyrimidinic (AP) sites, generating a 3'-hydroxyl group and a 5'-terminal sugar phosphate. The polypeptide is Probable endonuclease 4 (Streptomyces coelicolor (strain ATCC BAA-471 / A3(2) / M145)).